A 344-amino-acid chain; its full sequence is Ferrochelatase (344 aa).

Residues H196 and E277 each contribute to the Fe cation site.

Belongs to the ferrochelatase family.

It is found in the cytoplasm. It catalyses the reaction heme b + 2 H(+) = protoporphyrin IX + Fe(2+). It functions in the pathway porphyrin-containing compound metabolism; protoheme biosynthesis; protoheme from protoporphyrin-IX: step 1/1. Catalyzes the ferrous insertion into protoporphyrin IX. This is Ferrochelatase from Synechococcus sp. (strain JA-2-3B'a(2-13)) (Cyanobacteria bacterium Yellowstone B-Prime).